Consider the following 277-residue polypeptide: NH(3)-dependent NAD(+) synthetase (277 aa).

36–43 (GLSGGIDS) contributes to the ATP binding site. Residue aspartate 42 coordinates Mg(2+). Arginine 118 provides a ligand contact to deamido-NAD(+). Threonine 138 is a binding site for ATP. Glutamate 143 serves as a coordination point for Mg(2+). 2 residues coordinate ATP: lysine 167 and serine 189.

The protein belongs to the NAD synthetase family. Homodimer.

The catalysed reaction is deamido-NAD(+) + NH4(+) + ATP = AMP + diphosphate + NAD(+) + H(+). The protein operates within cofactor biosynthesis; NAD(+) biosynthesis; NAD(+) from deamido-NAD(+) (ammonia route): step 1/1. In terms of biological role, catalyzes the ATP-dependent amidation of deamido-NAD to form NAD. Uses ammonia as a nitrogen source. The chain is NH(3)-dependent NAD(+) synthetase from Chlorobaculum parvum (strain DSM 263 / NCIMB 8327) (Chlorobium vibrioforme subsp. thiosulfatophilum).